Consider the following 505-residue polypeptide: Protein phosphatase 1J (505 aa).

The tract at residues 1 to 103 is disordered; the sequence is MLNRVRSAVA…PPDTGRRLPW (103 aa). Residues 27-50 are compositionally biased toward low complexity; that stretch reads DLPNAASAPPAAAPEAPRSPPAKA. A phosphoserine mark is found at Ser-66 and Ser-76. The PPM-type phosphatase domain maps to 104 to 498; it reads STGYAEVINA…DDISVFVIPL (395 aa).

This sequence belongs to the PP2C family. As to quaternary structure, interacts with UBE2I/UBC9.

The catalysed reaction is O-phospho-L-seryl-[protein] + H2O = L-seryl-[protein] + phosphate. It catalyses the reaction O-phospho-L-threonyl-[protein] + H2O = L-threonyl-[protein] + phosphate. The sequence is that of Protein phosphatase 1J (PPM1J) from Homo sapiens (Human).